The sequence spans 101 residues: NAD(P)H-quinone oxidoreductase subunit 4L, chloroplastic (101 aa).

Helical transmembrane passes span 2–22, 32–52, and 61–81; these read MLEHVLVLSAYLFSIGIYGLI, MCLELILNAVNMNLVTFSDFF, and IFSIFVIAIAAAEAAIGPAIV.

It belongs to the complex I subunit 4L family. In terms of assembly, NDH is composed of at least 16 different subunits, 5 of which are encoded in the nucleus.

The protein localises to the plastid. The protein resides in the chloroplast thylakoid membrane. It carries out the reaction a plastoquinone + NADH + (n+1) H(+)(in) = a plastoquinol + NAD(+) + n H(+)(out). It catalyses the reaction a plastoquinone + NADPH + (n+1) H(+)(in) = a plastoquinol + NADP(+) + n H(+)(out). Functionally, NDH shuttles electrons from NAD(P)H:plastoquinone, via FMN and iron-sulfur (Fe-S) centers, to quinones in the photosynthetic chain and possibly in a chloroplast respiratory chain. The immediate electron acceptor for the enzyme in this species is believed to be plastoquinone. Couples the redox reaction to proton translocation, and thus conserves the redox energy in a proton gradient. The polypeptide is NAD(P)H-quinone oxidoreductase subunit 4L, chloroplastic (Lotus japonicus (Lotus corniculatus var. japonicus)).